The sequence spans 357 residues: DNA replication and repair protein RecF (357 aa).

30–37 (GANGSGKT) lines the ATP pocket.

The protein belongs to the RecF family.

The protein localises to the cytoplasm. The RecF protein is involved in DNA metabolism; it is required for DNA replication and normal SOS inducibility. RecF binds preferentially to single-stranded, linear DNA. It also seems to bind ATP. This Salmonella paratyphi A (strain ATCC 9150 / SARB42) protein is DNA replication and repair protein RecF.